The sequence spans 1132 residues: Tyrosine-protein kinase JAK2 (1132 aa).

Residues 1–239 (MGMACLTMTE…RYRFRRFIQQ (239 aa)) form an interaction with cytokine/interferon/growth hormone receptors region. The FERM domain occupies 37–380 (PVLQVYLYHS…GYYRLTADAH (344 aa)). Tyr119 bears the Phosphotyrosine; by autocatalysis mark. Phosphotyrosine is present on residues Tyr372 and Tyr373. The SH2; atypical domain maps to 401 to 482 (HGPISMDFAI…SLKDLLNCYQ (82 aa)). Ser523 is subject to Phosphoserine. In terms of domain architecture, Protein kinase 1 spans 545–809 (LIFNESLGQG…AVIRDLNSLF (265 aa)). Phosphotyrosine is present on residues Tyr570 and Tyr813. The region spanning 849–1126 (LKFLQQLGKG…RDLSLRVDQI (278 aa)) is the Protein kinase 2 domain. 855–863 (LGKGNFGSV) provides a ligand contact to ATP. Tyr868 is modified (phosphotyrosine; by autocatalysis). Residue Lys882 coordinates ATP. 2 positions are modified to phosphotyrosine; by autocatalysis: Tyr966 and Tyr972. Asp976 acts as the Proton acceptor in catalysis. A phosphotyrosine; by autocatalysis mark is found at Tyr1007 and Tyr1008.

This sequence belongs to the protein kinase superfamily. Tyr protein kinase family. JAK subfamily. Interacts with IL23R, SKB1 and STAM2. Interacts with EPOR. Interacts with LYN. Interacts with SIRPA. Interacts with SH2B1. Interacts with TEC. Interacts with IFNGR2 (via intracellular domain). Interacts with LEPR (Isoform B). Interacts with HSP90AB1; promotes functional activation in a heat shock-dependent manner. Interacts with STRA6. Interacts with ASB2; the interaction targets JAK2 for Notch-induced proteasomal degradation. Mg(2+) is required as a cofactor. Autophosphorylated, leading to regulate its activity. Leptin promotes phosphorylation on tyrosine residues, including phosphorylation on Tyr-813. Autophosphorylation on Tyr-119 in response to EPO down-regulates its kinase activity. Autophosphorylation on Tyr-868, Tyr-966 and Tyr-972 in response to growth hormone (GH) are required for maximal kinase activity. Also phosphorylated by TEC. Phosphorylated on tyrosine residues in response to interferon gamma signaling. Phosphorylated on tyrosine residues in response to a signaling cascade that is activated by increased cellular retinol. Post-translationally, undergoes Notch-induced ubiquitination and subsequent proteasomal degradation which is mediated by ASB1 or ASB2, the substrate-recognition components of probable ECS E3 ubiquitin-protein ligase complexes. Ubiquitously expressed throughout most tissues.

The protein localises to the endomembrane system. The protein resides in the cytoplasm. It localises to the nucleus. The enzyme catalyses L-tyrosyl-[protein] + ATP = O-phospho-L-tyrosyl-[protein] + ADP + H(+). With respect to regulation, regulated by autophosphorylation, can both activate or decrease activity. Heme regulates its activity by enhancing the phosphorylation on Tyr-1007 and Tyr-1008. Functionally, non-receptor tyrosine kinase involved in various processes such as cell growth, development, differentiation or histone modifications. Mediates essential signaling events in both innate and adaptive immunity. In the cytoplasm, plays a pivotal role in signal transduction via its association with type I receptors such as growth hormone (GHR), prolactin (PRLR), leptin (LEPR), erythropoietin (EPOR), thrombopoietin (THPO); or type II receptors including IFN-alpha, IFN-beta, IFN-gamma and multiple interleukins. Following ligand-binding to cell surface receptors, phosphorylates specific tyrosine residues on the cytoplasmic tails of the receptor, creating docking sites for STATs proteins. Subsequently, phosphorylates the STATs proteins once they are recruited to the receptor. Phosphorylated STATs then form homodimer or heterodimers and translocate to the nucleus to activate gene transcription. For example, cell stimulation with erythropoietin (EPO) during erythropoiesis leads to JAK2 autophosphorylation, activation, and its association with erythropoietin receptor (EPOR) that becomes phosphorylated in its cytoplasmic domain. Then, STAT5 (STAT5A or STAT5B) is recruited, phosphorylated and activated by JAK2. Once activated, dimerized STAT5 translocates into the nucleus and promotes the transcription of several essential genes involved in the modulation of erythropoiesis. Part of a signaling cascade that is activated by increased cellular retinol and that leads to the activation of STAT5 (STAT5A or STAT5B). In addition, JAK2 mediates angiotensin-2-induced ARHGEF1 phosphorylation. Plays a role in cell cycle by phosphorylating CDKN1B. Cooperates with TEC through reciprocal phosphorylation to mediate cytokine-driven activation of FOS transcription. In the nucleus, plays a key role in chromatin by specifically mediating phosphorylation of 'Tyr-41' of histone H3 (H3Y41ph), a specific tag that promotes exclusion of CBX5 (HP1 alpha) from chromatin. Up-regulates the potassium voltage-gated channel activity of KCNA3. The protein is Tyrosine-protein kinase JAK2 of Rattus norvegicus (Rat).